Consider the following 218-residue polypeptide: Adenylate kinase (218 aa).

An ATP-binding site is contributed by 10–15 (GAGKGT). The interval 30–59 (STGDMLRAAVKAGTPLGIAAKKIMDEGGLV) is NMP. AMP is bound by residues threonine 31, arginine 36, 57 to 59 (GLV), 85 to 88 (GFPR), and glutamine 92. The LID stretch occupies residues 122-159 (GRRVHPASGRTYHVKFNPPKVAGRDDVTGEELIQRDDD). ATP contacts are provided by residues arginine 123 and 132–133 (TY). Residues arginine 156 and arginine 167 each coordinate AMP. Position 203 (glycine 203) interacts with ATP.

This sequence belongs to the adenylate kinase family. Monomer.

The protein resides in the cytoplasm. It catalyses the reaction AMP + ATP = 2 ADP. Its pathway is purine metabolism; AMP biosynthesis via salvage pathway; AMP from ADP: step 1/1. Catalyzes the reversible transfer of the terminal phosphate group between ATP and AMP. Plays an important role in cellular energy homeostasis and in adenine nucleotide metabolism. This chain is Adenylate kinase, found in Herminiimonas arsenicoxydans.